Reading from the N-terminus, the 628-residue chain is Glutamyl-tRNA(Gln) amidotransferase subunit E (628 aa).

It belongs to the GatB/GatE family. GatE subfamily. In terms of assembly, heterodimer of GatD and GatE.

It carries out the reaction L-glutamyl-tRNA(Gln) + L-glutamine + ATP + H2O = L-glutaminyl-tRNA(Gln) + L-glutamate + ADP + phosphate + H(+). Allows the formation of correctly charged Gln-tRNA(Gln) through the transamidation of misacylated Glu-tRNA(Gln) in organisms which lack glutaminyl-tRNA synthetase. The reaction takes place in the presence of glutamine and ATP through an activated gamma-phospho-Glu-tRNA(Gln). The GatDE system is specific for glutamate and does not act on aspartate. This Pyrococcus furiosus (strain ATCC 43587 / DSM 3638 / JCM 8422 / Vc1) protein is Glutamyl-tRNA(Gln) amidotransferase subunit E.